The following is a 359-amino-acid chain: Probable mannitol dehydrogenase (359 aa).

Positions 48, 70, 101, 104, 107, 115, and 164 each coordinate Zn(2+).

Belongs to the zinc-containing alcohol dehydrogenase family. Requires Zn(2+) as cofactor.

It carries out the reaction D-mannitol + NAD(+) = D-mannose + NADH + H(+). Its function is as follows. Oxidizes mannitol to mannose. Provides the initial step by which translocated mannitol is committed to central metabolism and, by regulating mannitol pool size, is important in regulating salt tolerance at the cellular level. This Fragaria ananassa (Strawberry) protein is Probable mannitol dehydrogenase (CAD).